Reading from the N-terminus, the 259-residue chain is Glutamate 5-kinase (259 aa).

Lys18 contributes to the ATP binding site. Residues Ser54, Asp141, and Asn153 each coordinate substrate. Position 173–174 (173–174 (SD)) interacts with ATP.

Belongs to the glutamate 5-kinase family.

The protein resides in the cytoplasm. It catalyses the reaction L-glutamate + ATP = L-glutamyl 5-phosphate + ADP. The protein operates within amino-acid biosynthesis; L-proline biosynthesis; L-glutamate 5-semialdehyde from L-glutamate: step 1/2. Catalyzes the transfer of a phosphate group to glutamate to form L-glutamate 5-phosphate. This is Glutamate 5-kinase from Clavibacter sepedonicus (Clavibacter michiganensis subsp. sepedonicus).